Consider the following 497-residue polypeptide: Probable cytosol aminopeptidase (497 aa).

Positions 263 and 268 each coordinate Mn(2+). The active site involves Lys-275. Mn(2+) contacts are provided by Asp-286, Asp-345, and Glu-347. Arg-349 is an active-site residue.

Belongs to the peptidase M17 family. It depends on Mn(2+) as a cofactor.

The protein localises to the cytoplasm. The enzyme catalyses Release of an N-terminal amino acid, Xaa-|-Yaa-, in which Xaa is preferably Leu, but may be other amino acids including Pro although not Arg or Lys, and Yaa may be Pro. Amino acid amides and methyl esters are also readily hydrolyzed, but rates on arylamides are exceedingly low.. The catalysed reaction is Release of an N-terminal amino acid, preferentially leucine, but not glutamic or aspartic acids.. Its function is as follows. Presumably involved in the processing and regular turnover of intracellular proteins. Catalyzes the removal of unsubstituted N-terminal amino acids from various peptides. This is Probable cytosol aminopeptidase from Methylorubrum extorquens (strain CM4 / NCIMB 13688) (Methylobacterium extorquens).